The following is a 1280-amino-acid chain: Ankyrin repeat and sterile alpha motif domain-containing protein 1B (1280 aa).

7 ANK repeats span residues G2–G31, S57–V86, K90–R119, E126–M155, R159–S188, R192–T221, and E224–I253. Disordered regions lie at residues R299–K322, M361–S399, S479–S573, N704–G723, and S755–T791. The span at D482 to D491 shows a compositional bias: basic and acidic residues. 3 stretches are compositionally biased toward polar residues: residues K520–G550, A707–G723, and S770–S782. 2 consecutive SAM domains span residues C824–V890 and N898–E963. 2 disordered regions span residues R960 to A994 and G1208 to K1243. A compositionally biased stretch (polar residues) spans G980 to A994. The region spanning I1071–P1223 is the PID domain.

It localises to the cytoplasm. This is Ankyrin repeat and sterile alpha motif domain-containing protein 1B (anks1b) from Danio rerio (Zebrafish).